Consider the following 128-residue polypeptide: Cystatin-2 (128 aa).

Residues M1–G19 form the signal peptide. A Cystatin domain is found at Q29–W116. Cystine bridges form between C84-C96 and C107-C127.

The protein belongs to the cystatin family. Widely expressed. Detected in salivary glands (at protein level), gut (at protein level), ovaries, and Malpighian tubules.

The protein resides in the secreted. In terms of biological role, inhibitor of cysteine proteinases with broad specificity for mammalian cathepsins, including endopeptidases (cathepsins L and S) and exopeptidases (cathepsins B, C and H). Also inhibits endogenous cathepsin B-like and cathepsin C-like proteinases. Does not inhibit human legumain. May mimic specific host-derived cystatin(s) to interfere with its/their function in controlling cathepsin-mediated proteolysis. Affects the function of antigen-presenting mouse dendritic cells by reducing the production of the pro-inflammatory cytokines TNF and interleukin-12, and proliferation of antigen-specific CD4+ T-cells, suggesting it may suppress the host adaptive immune response. It is noteworthy that immunization of mice with this protein reduces O.moubata survival in infestation experiments. This is Cystatin-2 from Ornithodoros moubata (Soft tick).